The primary structure comprises 57 residues: Ribulose bisphosphate carboxylase large chain (57 aa).

The propeptide occupies 1 to 2 (MS). An N-acetylproline modification is found at Pro-3. The residue at position 14 (Lys-14) is an N6,N6,N6-trimethyllysine.

It belongs to the RuBisCO large chain family. Type I subfamily. Heterohexadecamer of 8 large chains and 8 small chains.

The protein resides in the plastid. The protein localises to the chloroplast. The enzyme catalyses 2 (2R)-3-phosphoglycerate + 2 H(+) = D-ribulose 1,5-bisphosphate + CO2 + H2O. The catalysed reaction is D-ribulose 1,5-bisphosphate + O2 = 2-phosphoglycolate + (2R)-3-phosphoglycerate + 2 H(+). In terms of biological role, ruBisCO catalyzes two reactions: the carboxylation of D-ribulose 1,5-bisphosphate, the primary event in carbon dioxide fixation, as well as the oxidative fragmentation of the pentose substrate in the photorespiration process. Both reactions occur simultaneously and in competition at the same active site. In Buxus sempervirens (Common box), this protein is Ribulose bisphosphate carboxylase large chain (rbcL).